The following is a 65-amino-acid chain: Alpha-conotoxin Mr1.1 (65 aa).

The N-terminal stretch at 1–21 is a signal peptide; the sequence is MGMRMMFTVFLLVVLATTVVS. Positions 22–48 are excised as a propeptide; the sequence is FTSDRASDGRKAAAKDKASDLVALTVK. Disulfide bonds link Cys-50–Cys-56 and Cys-51–Cys-64. The segment at 52–54 is ser-Xaa-Pro motif, crucial for potent interaction with nAChR; that stretch reads SHP. Cys-64 carries the cysteine amide modification.

It belongs to the conotoxin A superfamily. In terms of tissue distribution, expressed by the venom duct.

The protein localises to the secreted. Alpha-conotoxins act on postsynaptic membranes, they bind to the nicotinic acetylcholine receptors (nAChR) and thus inhibit them. This toxin potently and reversibly inhibits alpha-9-alpha-10/CHRNA9-CHRNA10 (IC(50)=92 nM (human) and IC(50)=8.3 nM (rat)) and human alpha3-beta-2/CHRNA3-CHRNB2 nAChR (IC(50)=218.9 nM). Also moderately inhibits human alpha-3-beta-4/CHRNA3-CHRNB4 (60% inhibition at 1 uM), rat alpha-7/CHRNA7 (65% inhibition at 1 uM) and rat alpha-3-beta-2/CHRNA3-CHRNB2 nAChR (50-70% inhibition at 10 uM). In two rat pain models, this toxin shows analgesic effect. The chain is Alpha-conotoxin Mr1.1 from Conus marmoreus (Marble cone).